The chain runs to 155 residues: MAEKMNVESFNLDHTKVKAPFVRLAGTKVGVHGDEIYKYDVRFKQPNKEHMEMPALHSLEHLMAELARNHTDKLVDISPMGCQTGFYVSFINHSDYDDALEIIATTLTDVLVATEVPACNEVQCGWAASHSLEGAKALAEEFLAKRSEWKNVFGE.

Fe cation contacts are provided by histidine 57, histidine 61, and cysteine 124.

This sequence belongs to the LuxS family. As to quaternary structure, homodimer. It depends on Fe cation as a cofactor.

It carries out the reaction S-(5-deoxy-D-ribos-5-yl)-L-homocysteine = (S)-4,5-dihydroxypentane-2,3-dione + L-homocysteine. Its function is as follows. Involved in the synthesis of autoinducer 2 (AI-2) which is secreted by bacteria and is used to communicate both the cell density and the metabolic potential of the environment. The regulation of gene expression in response to changes in cell density is called quorum sensing. Catalyzes the transformation of S-ribosylhomocysteine (RHC) to homocysteine (HC) and 4,5-dihydroxy-2,3-pentadione (DPD). This is S-ribosylhomocysteine lyase from Listeria monocytogenes serovar 1/2a (strain ATCC BAA-679 / EGD-e).